The chain runs to 206 residues: FKBP-type 22 kDa peptidyl-prolyl cis-trans isomerase (206 aa).

A PPIase FKBP-type domain is found at 120–206 (TDRVRVHYTG…VFEVELLEIL (87 aa)).

As to quaternary structure, homodimer.

The protein localises to the cytoplasm. Its subcellular location is the periplasm. It catalyses the reaction [protein]-peptidylproline (omega=180) = [protein]-peptidylproline (omega=0). Its activity is regulated as follows. Strongly inhibited by FK506. Functionally, PPIases accelerate the folding of proteins. Catalyzes the cis-trans isomerization of proline imidic peptide bonds in oligopeptides. Displays a preference for substrates with a lysyl residue in the P1 position. In Escherichia coli (strain K12), this protein is FKBP-type 22 kDa peptidyl-prolyl cis-trans isomerase (fklB).